A 108-amino-acid chain; its full sequence is Small ribosomal subunit protein eS25x (108 aa).

The segment at 1 to 36 (MAPKKDKVPPPSSKPAKSGGGKQKKKKWSKGKQKEK) is disordered. Residues 22 to 31 (KQKKKKWSKG) show a composition bias toward basic residues.

Belongs to the eukaryotic ribosomal protein eS25 family.

This Arabidopsis thaliana (Mouse-ear cress) protein is Small ribosomal subunit protein eS25x (RPS25D).